Reading from the N-terminus, the 1551-residue chain is UDP-glucose:glycoprotein glucosyltransferase 1 (1551 aa).

An N-terminal signal peptide occupies residues 1–42 (MCSRGDANTADAAAARRVTGLRYNMRLLIALALPCLFSLAEA). N269, N536, and N1228 each carry an N-linked (GlcNAc...) asparagine glycan. A glucosyltransferase region spans residues 1244–1551 (KAEEVKQDKD…QEGSQKHEEL (308 aa)). Residue S1277 is modified to Phosphoserine. Positions 1531-1551 (KELGTLHTEETQEGSQKHEEL) are disordered. The short motif at 1548 to 1551 (HEEL) is the Prevents secretion from ER element.

This sequence belongs to the glycosyltransferase 8 family. Monomer as well as in a tight complex with SELENOF. Interacts with METTL23. Part of a large chaperone multiprotein complex comprising DNAJB11, HSP90B1, HSPA5, HYOU, PDIA2, PDIA4, PDIA6, PPIB, SDF2L1, UGGT1 and very small amounts of ERP29, but not, or at very low levels, CALR nor CANX. Ca(2+) serves as cofactor. Mn(2+) is required as a cofactor.

It localises to the endoplasmic reticulum lumen. Its subcellular location is the endoplasmic reticulum-Golgi intermediate compartment. The catalysed reaction is N(4)-(alpha-D-Man-(1-&gt;2)-alpha-D-Man-(1-&gt;2)-alpha-D-Man-(1-&gt;3)-[alpha-D-Man-(1-&gt;2)-alpha-D-Man-(1-&gt;3)-[alpha-D-Man-(1-&gt;2)-alpha-D-Man-(1-&gt;6)]-alpha-D-Man-(1-&gt;6)]-beta-D-Man-(1-&gt;4)-beta-D-GlcNAc-(1-&gt;4)-beta-D-GlcNAc)-L-asparaginyl-[protein] (N-glucan mannose isomer 9A1,2,3B1,2,3) + UDP-alpha-D-glucose = N(4)-(alpha-D-Glc-(1-&gt;3)-alpha-D-Man-(1-&gt;2)-alpha-D-Man-(1-&gt;2)-alpha-D-Man-(1-&gt;3)-[alpha-D-Man-(1-&gt;2)-alpha-D-Man-(1-&gt;3)-[alpha-D-Man-(1-&gt;2)-alpha-D-Man-(1-&gt;6)]-alpha-D-Man-(1-&gt;6)]-beta-D-Man-(1-&gt;4)-beta-D-GlcNAc-(1-&gt;4)-beta-D-GlcNAc)-L-asparaginyl-[protein] + UDP + H(+). It participates in protein modification; protein glycosylation. Functionally, recognizes glycoproteins with minor folding defects. Reglucosylates single N-glycans near the misfolded part of the protein, thus providing quality control for protein folding in the endoplasmic reticulum. Reglucosylated proteins are recognized by calreticulin for recycling to the endoplasmic reticulum and refolding or degradation. The sequence is that of UDP-glucose:glycoprotein glucosyltransferase 1 (Uggt1) from Mus musculus (Mouse).